We begin with the raw amino-acid sequence, 264 residues long: Phosphonoacetaldehyde hydrolase (264 aa).

The active-site Nucleophile is the D9. Residues D9 and A11 each contribute to the Mg(2+) site. K50 acts as the Schiff-base intermediate with substrate in catalysis. D183 contacts Mg(2+).

It belongs to the HAD-like hydrolase superfamily. PhnX family. As to quaternary structure, homodimer. It depends on Mg(2+) as a cofactor.

The catalysed reaction is phosphonoacetaldehyde + H2O = acetaldehyde + phosphate + H(+). Functionally, involved in phosphonate degradation. The protein is Phosphonoacetaldehyde hydrolase of Bacillus cereus (strain ATCC 14579 / DSM 31 / CCUG 7414 / JCM 2152 / NBRC 15305 / NCIMB 9373 / NCTC 2599 / NRRL B-3711).